Reading from the N-terminus, the 223-residue chain is Interleukin-12 subunit alpha (223 aa).

Residues 1–23 (MCPSARSLLLLASLVLLEHLGSA) form the signal peptide. Residues N41, N79, N121, and N176 are each glycosylated (N-linked (GlcNAc...) asparagine). 2 cysteine pairs are disulfide-bonded: C66–C200 and C87–C125.

It belongs to the IL-6 superfamily. In terms of assembly, heterodimer with IL12B; disulfide-linked. This heterodimer is known as interleukin IL-12. Heterodimer with EBI3/IL27B; not disulfide-linked. This heterodimer is known as interleukin IL-35. Interacts with NBR1; this interaction promotes IL-12 secretion.

It localises to the secreted. Functionally, heterodimerizes with IL12B to form the IL-12 cytokine or with EBI3/IL27B to form the IL-35 cytokine. IL-12 is primarily produced by professional antigen-presenting cells (APCs) such as B-cells and dendritic cells (DCs) as well as macrophages and granulocytes and regulates T-cell and natural killer-cell responses, induces the production of interferon-gamma (IFN-gamma), favors the differentiation of T-helper 1 (Th1) cells and is an important link between innate resistance and adaptive immunity. Mechanistically, exerts its biological effects through a receptor composed of IL12R1 and IL12R2 subunits. Binding to the receptor results in the rapid tyrosine phosphorylation of a number of cellular substrates including the JAK family kinases TYK2 and JAK2. In turn, recruited STAT4 gets phosphorylated and translocates to the nucleus where it regulates cytokine/growth factor responsive genes. As part of IL-35, plays essential roles in maintaining the immune homeostasis of the liver microenvironment and also functions as an immune-suppressive cytokine. Mediates biological events through unconventional receptors composed of IL12RB2 and gp130/IL6ST heterodimers or homodimers. Signaling requires the transcription factors STAT1 and STAT4, which form a unique heterodimer that binds to distinct DNA sites. In Marmota monax (Woodchuck), this protein is Interleukin-12 subunit alpha (IL12A).